A 278-amino-acid chain; its full sequence is MYDLTGKHVCYVADCGGIALETSKVLMTKNIAKLAILQSVENPPAIAQLQSIKHSTQIFFWTFDVTMAREEMKKYFDEVMVQMDYIDVLINGATLCDERNIDATINTNLTGMMNTVATVLPYMDRKMGGSGGLIVNVTSVIGLDPSPVFCAYSASKFGVIGFTRSLADPLYFTQNGVAVMAVCCGPTKVFVDRELTAFLAYGQSFADRLRRAPCQSTAVCGQNIVNAIERSENGQIWIADKGGLESVALHWYWHMADQFVNYMQSTDDEDQEFFLGQR.

11–34 (YVADCGGIALETSKVLMTKNIAKL) is an NAD(+) binding site. Substrate is bound at residue Ser-139. The active-site Proton acceptor is the Tyr-152.

Belongs to the short-chain dehydrogenases/reductases (SDR) family.

In Drosophila pseudoobscura pseudoobscura (Fruit fly), this protein is Alcohol dehydrogenase-related 31 kDa protein (Adhr).